Reading from the N-terminus, the 85-residue chain is Large ribosomal subunit protein bL31B (85 aa).

The protein belongs to the bacterial ribosomal protein bL31 family. Type B subfamily. As to quaternary structure, part of the 50S ribosomal subunit.

The polypeptide is Large ribosomal subunit protein bL31B (Aliivibrio salmonicida (strain LFI1238) (Vibrio salmonicida (strain LFI1238))).